The primary structure comprises 867 residues: MNVATCTHQTHHAARAPGATSAPGAASGDPLGARRPIGDDECEQYTSSVSLARMLYGGDLAEWVPRVHPKTTIERQQHGPVTFPDASAPTARCVTVVRAPMGSGKTTALIRWLGEAIHSPDTSVLVVSCRRSFTQTLATRFAESGLPDFVTYFSSTNYIMNDRPFHRLIVQVESLHRVGPNLLNNYDVLVLDEVMSTLGQLYSPTMQQLGRVDALMLRLLRTCPRIIAMDATANAQLVDFLCSLRGEKNVHVVIGEYAMPGFSARRCLFLPRLGPEVLQAALRRRGPAGGAPPPDAPPDATFFGELEARLAGGDNVCIFSSTVSFAEVVARFCRQFTDRVLLLHSLTPPGDVTTWGRYRVVIYTTVVTVGLSFDPPHFDSMFAYVKPMNYGPDMVSVYQSLGRVRTLRKGELLIYMDGSGARSEPVFTPMLLNHVVSASGQWPAQFSQVTNLLCRRFKGRCDASHADAAQARGSRIYSKFRYKHYFERCTLACLADSLNILHMLLTLNCMHVRFWGHDAALTPRNFCLFLRGIHFDALRAQRDLRELRCQDPDTSLSAQAAETEEVGLFVEKYLRPDVAPAEVVALMRGLNSLVGRTRFIYLVLLEACLRVPMAAHSSAIFRRLYDHYATGVIPTINAAGELELVALHPTLNVAPVWELFRLCSTMAACLQWDSMAGGSGRTFSPEDVLELLNPHYDRYMQLVFELGHCNVTDGPLLSEDAVKRVADALSGCPPRGSVSETEHALSLFKIIWGELFGVQLAKSTQTFPGAGRVKNLTKRAIVELLDAHRIDHSACRTHRQLYALLMAHKREFAGARFKLRAPAWGRCLRTHASGAQPNTDIILEAALSELPTEAWPMMQGAVNFSTL.

The disordered stretch occupies residues 1–39 (MNVATCTHQTHHAARAPGATSAPGAASGDPLGARRPIGD). A compositionally biased stretch (low complexity) spans 15–28 (RAPGATSAPGAASG). In terms of domain architecture, Helicase ATP-binding spans 86–251 (ASAPTARCVT…CSLRGEKNVH (166 aa)). 99–106 (APMGSGKT) is a binding site for ATP.

The protein belongs to the herpesviridae OriBP family. In terms of assembly, homodimer. Interacts with the major DNA-binding protein ICP8. Interacts with the helicase/primase component UL8 and the polymerase accessory protein UL42.

The protein localises to the host nucleus. Functionally, functions as a docking protein to recruit essential components of the viral replication machinery to viral DNA origins. In the presence of the major DNA-binding protein, opens dsDNA leading to a conformational change in the origin that facilitates DNA unwinding and subsequent replication. The protein is Replication origin-binding protein of Human herpesvirus 2 (strain HG52) (HHV-2).